Reading from the N-terminus, the 265-residue chain is Reduced viability upon starvation protein 161 (265 aa).

Residues 15 to 239 (HSVIIKNVDK…LDQQSRDDYA (225 aa)) form the BAR domain. Positions 126 to 193 (YFKEIEEAIK…NQLKTELPQL (68 aa)) form a coiled coil.

It localises to the cytoplasm. The protein localises to the cytoskeleton. Component of a cytoskeletal structure that is required for the formation of endocytic vesicles at the plasma membrane level. In Saccharomyces cerevisiae (strain ATCC 204508 / S288c) (Baker's yeast), this protein is Reduced viability upon starvation protein 161 (RVS161).